The primary structure comprises 740 residues: ATP-dependent RNA helicase DBP7 (740 aa).

Residues 1-104 (MSFNDDDDGM…SNVEQPARVT (104 aa)) are disordered. Residues 13-25 (NFTTDVSDASETV) are compositionally biased toward polar residues. Residues 43-60 (MMMEGRKPRVRGEKRPLE) show a composition bias toward basic and acidic residues. Residues 72–81 (ASSSNSTSAQ) are compositionally biased toward polar residues. A Q motif motif is present at residues 149–178 (DTFDSFGITDTMVSHLNVKMKISKPTKIQK). Residues 182 to 376 (PPFLQAQNDL…NVTLQNYKLI (195 aa)) form the Helicase ATP-binding domain. An ATP-binding site is contributed by 195-202 (AQTGSGKT). The DEAD box signature appears at 311 to 314 (DEGD). In terms of domain architecture, Helicase C-terminal spans 414 to 607 (TITQKHYKEG…VLRPAFEGLN (194 aa)). Residues 695–721 (SMGLQQGKAGAAAAASQKKPKEDSKSK) form a disordered region. Over residues 697-711 (GLQQGKAGAAAAASQ) the composition is skewed to low complexity.

The protein belongs to the DEAD box helicase family. DDX31/DBP7 subfamily.

Its subcellular location is the nucleus. The protein resides in the nucleolus. It carries out the reaction ATP + H2O = ADP + phosphate + H(+). Its function is as follows. ATP-binding RNA helicase involved in the biogenesis of 60S ribosomal subunits and is required for the normal formation of 25S and 5.8S rRNAs. The chain is ATP-dependent RNA helicase DBP7 (DBP7) from Kluyveromyces lactis (strain ATCC 8585 / CBS 2359 / DSM 70799 / NBRC 1267 / NRRL Y-1140 / WM37) (Yeast).